The sequence spans 540 residues: Putative laccase-11 (540 aa).

Plastocyanin-like domains are found at residues 1 to 114 (MATV…PPRG), 124 to 279 (REVP…YYGA), and 389 to 523 (NFPA…NDGP). Residues His-48, His-50, His-93, and His-95 each contribute to the Cu cation site. Cu cation-binding residues include His-440, His-443, His-445, His-502, Cys-503, His-504, and His-508.

This sequence belongs to the multicopper oxidase family. Cu cation serves as cofactor.

The protein localises to the secreted. The protein resides in the extracellular space. It localises to the apoplast. The catalysed reaction is 4 hydroquinone + O2 = 4 benzosemiquinone + 2 H2O. Lignin degradation and detoxification of lignin-derived products. This Oryza sativa subsp. japonica (Rice) protein is Putative laccase-11 (LAC11).